Consider the following 576-residue polypeptide: Proline--tRNA ligase (576 aa).

The protein belongs to the class-II aminoacyl-tRNA synthetase family. ProS type 1 subfamily. As to quaternary structure, homodimer.

Its subcellular location is the cytoplasm. It carries out the reaction tRNA(Pro) + L-proline + ATP = L-prolyl-tRNA(Pro) + AMP + diphosphate. Functionally, catalyzes the attachment of proline to tRNA(Pro) in a two-step reaction: proline is first activated by ATP to form Pro-AMP and then transferred to the acceptor end of tRNA(Pro). As ProRS can inadvertently accommodate and process non-cognate amino acids such as alanine and cysteine, to avoid such errors it has two additional distinct editing activities against alanine. One activity is designated as 'pretransfer' editing and involves the tRNA(Pro)-independent hydrolysis of activated Ala-AMP. The other activity is designated 'posttransfer' editing and involves deacylation of mischarged Ala-tRNA(Pro). The misacylated Cys-tRNA(Pro) is not edited by ProRS. The protein is Proline--tRNA ligase of Leptospira interrogans serogroup Icterohaemorrhagiae serovar Lai (strain 56601).